The primary structure comprises 527 residues: Phosphoenolpyruvate carboxykinase (ATP) (527 aa).

Residues Arg-55, Tyr-191, and Lys-197 each coordinate substrate. ATP is bound by residues Lys-197, His-216, and 232–240 (GLSGTGKTT). The Mn(2+) site is built by Lys-197 and His-216. Asp-253 contributes to the Mn(2+) binding site. 3 residues coordinate ATP: Glu-281, Arg-318, and Thr-443. Arg-318 lines the substrate pocket.

Belongs to the phosphoenolpyruvate carboxykinase (ATP) family. The cofactor is Mn(2+).

The protein resides in the cytoplasm. The enzyme catalyses oxaloacetate + ATP = phosphoenolpyruvate + ADP + CO2. It functions in the pathway carbohydrate biosynthesis; gluconeogenesis. Its function is as follows. Involved in the gluconeogenesis. Catalyzes the conversion of oxaloacetate (OAA) to phosphoenolpyruvate (PEP) through direct phosphoryl transfer between the nucleoside triphosphate and OAA. This chain is Phosphoenolpyruvate carboxykinase (ATP), found in Brevibacillus brevis (strain 47 / JCM 6285 / NBRC 100599).